The chain runs to 505 residues: uncharacterized protein (505 aa).

The N-terminal stretch at 1-22 is a signal peptide; it reads MAILKSALVGFICFLHFFIVNA. 2 N-linked (GlcNAc...) asparagine glycosylation sites follow: Asn-25 and Asn-114. The next 5 helical transmembrane spans lie at 181–201, 216–236, 266–286, 291–311, and 318–338; these read LFLN…WSFI, ISGV…YFYF, FLLL…GSLL, ILAG…FISP, and VILF…LWIV. N-linked (GlcNAc...) asparagine glycosylation is present at Asn-342. Transmembrane regions (helical) follow at residues 365 to 385 and 400 to 420; these read IVIC…AILI and LLWF…MLTI. Residue Asn-454 is glycosylated (N-linked (GlcNAc...) asparagine).

The protein belongs to the LU7TM family.

It localises to the membrane. This is an uncharacterized protein from Schizosaccharomyces pombe (strain 972 / ATCC 24843) (Fission yeast).